We begin with the raw amino-acid sequence, 236 residues long: Leucyl/phenylalanyl-tRNA--protein transferase (236 aa).

Belongs to the L/F-transferase family.

The protein resides in the cytoplasm. The catalysed reaction is N-terminal L-lysyl-[protein] + L-leucyl-tRNA(Leu) = N-terminal L-leucyl-L-lysyl-[protein] + tRNA(Leu) + H(+). It carries out the reaction N-terminal L-arginyl-[protein] + L-leucyl-tRNA(Leu) = N-terminal L-leucyl-L-arginyl-[protein] + tRNA(Leu) + H(+). The enzyme catalyses L-phenylalanyl-tRNA(Phe) + an N-terminal L-alpha-aminoacyl-[protein] = an N-terminal L-phenylalanyl-L-alpha-aminoacyl-[protein] + tRNA(Phe). Its function is as follows. Functions in the N-end rule pathway of protein degradation where it conjugates Leu, Phe and, less efficiently, Met from aminoacyl-tRNAs to the N-termini of proteins containing an N-terminal arginine or lysine. In Aliivibrio salmonicida (strain LFI1238) (Vibrio salmonicida (strain LFI1238)), this protein is Leucyl/phenylalanyl-tRNA--protein transferase.